Consider the following 298-residue polypeptide: Cyclin-dependent kinase 2 (298 aa).

An N-acetylmethionine modification is found at M1. One can recognise a Protein kinase domain in the interval 4 to 286; it reads FQKVEKIGEG…AKAALAHPFF (283 aa). An N6-acetyllysine modification is found at K6. 10-18 serves as a coordination point for ATP; it reads IGEGTYGVV. T14 bears the Phosphothreonine mark. Y15 is modified (phosphotyrosine; by WEE1). Y19 is subject to Phosphotyrosine. ATP contacts are provided by residues K33, 81–83, and D86; that span reads EFL. The active-site Proton acceptor is the D127. Residues 129 to 132 and D145 each bind ATP; that span reads KPQN. Mg(2+)-binding residues include N132 and D145. Phosphothreonine; by CAK and CCRK is present on T160.

The protein belongs to the protein kinase superfamily. CMGC Ser/Thr protein kinase family. CDC2/CDKX subfamily. In terms of assembly, found in a complex with CABLES1, CCNA1 and CCNE1. Interacts with CABLES1. Interacts with UHRF2. Part of a complex consisting of UHRF2, CDK2 and CCNE1. Interacts with the Speedy/Ringo proteins SPDYA and SPDYC. Interaction with SPDYA promotes kinase activation via a conformation change that alleviates obstruction of the substrate-binding cleft by the T-loop. Found in a complex with both SPDYA and CDKN1B/KIP1. Binds to RB1 and CDK7. Binding to CDKN1A (p21) leads to CDK2/cyclin E inactivation at the G1-S phase DNA damage checkpoint, thereby arresting cells at the G1-S transition during DNA repair. Associated with PTPN6 and beta-catenin/CTNNB1. Interacts with CACUL1. May interact with CEP63. Interacts with ANKRD17. Interacts with CEBPA (when phosphorylated). Forms a ternary complex with CCNA2 and CDKN1B; CDKN1B inhibits the kinase activity of CDK2 through conformational rearrangements. Interacts with cyclins A, B1, B3, D, or E. Interacts with CDK2AP2. Mg(2+) is required as a cofactor. In terms of processing, phosphorylated at Thr-160 by CDK7 in a CAK complex. Phosphorylation at Thr-160 promotes kinase activity, whereas phosphorylation at Tyr-15 by WEE1 reduces slightly kinase activity. Phosphorylated on Thr-14 and Tyr-15 during S and G2 phases before being dephosphorylated by CDC25A. Post-translationally, nitrosylated after treatment with nitric oxide (DETA-NO).

The protein resides in the cytoplasm. It is found in the cytoskeleton. The protein localises to the microtubule organizing center. It localises to the centrosome. Its subcellular location is the nucleus. The protein resides in the cajal body. It is found in the endosome. It carries out the reaction L-seryl-[protein] + ATP = O-phospho-L-seryl-[protein] + ADP + H(+). The enzyme catalyses L-threonyl-[protein] + ATP = O-phospho-L-threonyl-[protein] + ADP + H(+). With respect to regulation, phosphorylation at Thr-14 or Tyr-15 inactivates the enzyme, while phosphorylation at Thr-160 activates it. Inhibited by 1,25-dihydroxyvitamin D(3) (1,25-(OH)(2)D(3)), AG-024322, N-(4-Piperidinyl)-4-(2,6-dichlorobenzoylamino)-1H-pyrazole-3-carboxamide (AT7519), R547 (Ro-4584820), purine, pyrimidine and pyridine derivatives, 2-aminopyrimidines, paullones, thiazo derivatives, macrocyclic quinoxalin-2-one, pyrazolo[1,5-a]-1,3,5-triazine, pyrazolo[1,5-a]pyrimidine, 2-(1-ethyl-2-hydroxyethylamino)-6-benzylamino-9-isopropylpurine (roscovitine, seliciclib and CYC202), SNS-032 (BMS-387032), triazolo[1,5-a]pyrimidines, staurosporine and olomoucine. Stimulated by MYC. Inactivated by CDKN1A (p21). Its function is as follows. Serine/threonine-protein kinase involved in the control of the cell cycle; essential for meiosis, but dispensable for mitosis. Phosphorylates CABLES1, CTNNB1, CDK2AP2, ERCC6, NBN, USP37, p53/TP53, NPM1, CDK7, RB1, BRCA2, MYC, NPAT, EZH2. Triggers duplication of centrosomes and DNA. Acts at the G1-S transition to promote the E2F transcriptional program and the initiation of DNA synthesis, and modulates G2 progression; controls the timing of entry into mitosis/meiosis by controlling the subsequent activation of cyclin B/CDK1 by phosphorylation, and coordinates the activation of cyclin B/CDK1 at the centrosome and in the nucleus. Crucial role in orchestrating a fine balance between cellular proliferation, cell death, and DNA repair in embryonic stem cells (ESCs). Activity of CDK2 is maximal during S phase and G2; activated by interaction with cyclin E during the early stages of DNA synthesis to permit G1-S transition, and subsequently activated by cyclin A2 (cyclin A1 in germ cells) during the late stages of DNA replication to drive the transition from S phase to mitosis, the G2 phase. EZH2 phosphorylation promotes H3K27me3 maintenance and epigenetic gene silencing. Cyclin E/CDK2 prevents oxidative stress-mediated Ras-induced senescence by phosphorylating MYC. Involved in G1-S phase DNA damage checkpoint that prevents cells with damaged DNA from initiating mitosis; regulates homologous recombination-dependent repair by phosphorylating BRCA2, this phosphorylation is low in S phase when recombination is active, but increases as cells progress towards mitosis. In response to DNA damage, double-strand break repair by homologous recombination a reduction of CDK2-mediated BRCA2 phosphorylation. Involved in regulation of telomere repair by mediating phosphorylation of NBN. Phosphorylation of RB1 disturbs its interaction with E2F1. NPM1 phosphorylation by cyclin E/CDK2 promotes its dissociates from unduplicated centrosomes, thus initiating centrosome duplication. Cyclin E/CDK2-mediated phosphorylation of NPAT at G1-S transition and until prophase stimulates the NPAT-mediated activation of histone gene transcription during S phase. Required for vitamin D-mediated growth inhibition by being itself inactivated. Involved in the nitric oxide- (NO) mediated signaling in a nitrosylation/activation-dependent manner. USP37 is activated by phosphorylation and thus triggers G1-S transition. CTNNB1 phosphorylation regulates insulin internalization. Phosphorylates FOXP3 and negatively regulates its transcriptional activity and protein stability. Phosphorylates ERCC6 which is essential for its chromatin remodeling activity at DNA double-strand breaks. Acts as a regulator of the phosphatidylinositol 3-kinase/protein kinase B signal transduction by mediating phosphorylation of the C-terminus of protein kinase B (PKB/AKT1 and PKB/AKT2), promoting its activation. The polypeptide is Cyclin-dependent kinase 2 (CDK2) (Homo sapiens (Human)).